A 192-amino-acid polypeptide reads, in one-letter code: MKWCVLMLALLQSLCCSGLPLYQSELASTADKALVVTMTQVNNLYAGLRLYRVTRGSIKRVVPLGLNTYDLMMNFGIKETDCLKSSGEDPQRCAFRVGFFVPAASCTARVRVTAELTQVVSLNCGQDSSSSESSSEENFTRKRQQLNVQPSGNRGPVLPGFSEATLFPSHSFSRQVEPQPIPRGDSIGNHLE.

An N-terminal signal peptide occupies residues methionine 1–glycine 18. Intrachain disulfides connect cysteine 82–cysteine 93 and cysteine 106–cysteine 124. Positions cysteine 124–glutamate 192 are disordered. Positions serine 128–glutamate 137 are enriched in low complexity.

It belongs to the SPP2 family. Multiply phosphorylated at serine residues.

Its subcellular location is the secreted. In terms of biological role, could coordinate an aspect of bone turnover. The polypeptide is Secreted phosphoprotein 24 (spp2) (Oncorhynchus mykiss (Rainbow trout)).